The sequence spans 204 residues: Large ribosomal subunit protein bL9 (204 aa).

The tract at residues 180–204 (DDIGGAASDDEGDAPAAAADEEESK) is disordered. The span at 187–204 (SDDEGDAPAAAADEEESK) shows a compositional bias: acidic residues.

Belongs to the bacterial ribosomal protein bL9 family.

Its function is as follows. Binds to the 23S rRNA. The protein is Large ribosomal subunit protein bL9 of Ruegeria sp. (strain TM1040) (Silicibacter sp.).